The chain runs to 250 residues: Complement factor B-like protease (250 aa).

Sushi domains are found at residues 3–73 (TRCD…KCRA), 74–133 (VWCP…VCDD), and 136–193 (GDCP…QCRA). 6 disulfides stabilise this stretch: Cys5–Cys44, Cys30–Cys71, Cys76–Cys118, Cys104–Cys131, Cys138–Cys178, and Cys164–Cys191. A glycan (N-linked (GlcNAc...) asparagine) is linked at Asn115. Asn221 carries N-linked (GlcNAc...) asparagine glycosylation.

This sequence belongs to the peptidase S1 family. Plasma.

It is found in the secreted. Its function is as follows. Required in both the classical and alternate pathways of the complement system. The sequence is that of Complement factor B-like protease from Gallus gallus (Chicken).